A 207-amino-acid chain; its full sequence is N-(5'-phosphoribosyl)anthranilate isomerase (207 aa).

This sequence belongs to the TrpF family.

The enzyme catalyses N-(5-phospho-beta-D-ribosyl)anthranilate = 1-(2-carboxyphenylamino)-1-deoxy-D-ribulose 5-phosphate. The protein operates within amino-acid biosynthesis; L-tryptophan biosynthesis; L-tryptophan from chorismate: step 3/5. The chain is N-(5'-phosphoribosyl)anthranilate isomerase from Legionella pneumophila (strain Corby).